Consider the following 96-residue polypeptide: Protein Vpr (96 aa).

Positions 1-42 (MEQAPADQGPQREPHNEWTLELLEELKQEAVRHFPRIWLHSL) are homooligomerization. 3 positions are modified to phosphoserine; by host: Ser-79, Ser-94, and Ser-96.

It belongs to the HIV-1 VPR protein family. Homooligomer, may form homodimer. Interacts with p6-gag region of the Pr55 Gag precursor protein through a (Leu-X-X)4 motif near the C-terminus of the P6gag protein. Interacts with host UNG. May interact with host RAD23A/HHR23A. Interacts with host VPRBP/DCAF1, leading to hijack the CUL4A-RBX1-DDB1-DCAF1/VPRBP complex, mediating ubiquitination of host proteins such as TERT and ZGPAT and arrest of the cell cycle in G2 phase. Phosphorylated on several residues by host. These phosphorylations regulate VPR activity for the nuclear import of the HIV-1 pre-integration complex.

The protein resides in the virion. Its subcellular location is the host nucleus. The protein localises to the host extracellular space. Functionally, during virus replication, may deplete host UNG protein, and incude G2-M cell cycle arrest. Acts by targeting specific host proteins for degradation by the 26S proteasome, through association with the cellular CUL4A-DDB1 E3 ligase complex by direct interaction with host VPRPB/DCAF-1. Cell cycle arrest reportedly occurs within hours of infection and is not blocked by antiviral agents, suggesting that it is initiated by the VPR carried into the virion. Additionally, VPR induces apoptosis in a cell cycle dependent manner suggesting that these two effects are mechanistically linked. Detected in the serum and cerebrospinal fluid of AIDS patient, VPR may also induce cell death to bystander cells. Its function is as follows. During virus entry, plays a role in the transport of the viral pre-integration (PIC) complex to the host nucleus. This function is crucial for viral infection of non-dividing macrophages. May act directly at the nuclear pore complex, by binding nucleoporins phenylalanine-glycine (FG)-repeat regions. The sequence is that of Protein Vpr from Homo sapiens (Human).